Consider the following 673-residue polypeptide: eEF1A lysine and N-terminal methyltransferase homolog (673 aa).

The protein belongs to the methyltransferase superfamily.

The catalysed reaction is L-lysyl-[protein] + S-adenosyl-L-methionine = N(6)-methyl-L-lysyl-[protein] + S-adenosyl-L-homocysteine + H(+). It catalyses the reaction N(6)-methyl-L-lysyl-[protein] + S-adenosyl-L-methionine = N(6),N(6)-dimethyl-L-lysyl-[protein] + S-adenosyl-L-homocysteine + H(+). It carries out the reaction N-terminal glycyl-L-lysyl-L-glutamyl-[protein] + 3 S-adenosyl-L-methionine = N-terminal N,N,N-trimethyl-glycyl-L-lysyl-L-glutamyl-[protein] + 3 S-adenosyl-L-homocysteine + 3 H(+). Its function is as follows. Dual methyltransferase. It catalyzes N-terminal methylation of target proteins via its C-terminus. It catalyzes dimethylation on lysine residues of target proteins via its N-terminus. This is eEF1A lysine and N-terminal methyltransferase homolog from Drosophila melanogaster (Fruit fly).